Here is a 247-residue protein sequence, read N- to C-terminus: Cell division protein ZapD (247 aa).

This sequence belongs to the ZapD family. Interacts with FtsZ.

It localises to the cytoplasm. Cell division factor that enhances FtsZ-ring assembly. Directly interacts with FtsZ and promotes bundling of FtsZ protofilaments, with a reduction in FtsZ GTPase activity. The sequence is that of Cell division protein ZapD from Escherichia fergusonii (strain ATCC 35469 / DSM 13698 / CCUG 18766 / IAM 14443 / JCM 21226 / LMG 7866 / NBRC 102419 / NCTC 12128 / CDC 0568-73).